Here is a 941-residue protein sequence, read N- to C-terminus: MTVDYKNTLNLPETSFPMRGDLAKREPDMLKNWYEKNLYQKIRKASKGKKSFILHDGPPYANGNIHIGHAVNKILKDIIIKSKTALGFDSPYIPGWDCHGLPIELKVEGLVGKPNEKISAAEFRQKCREYASEQVEGQKKDFIRLGVLGDWDNPYLTMNFDTEANIIRTLGKVIENGHLYKGSKPVHWCLDCGSSLAEAEVEYEDKVSPSIYVRFPVESADEIEAKFSAQGRGQGKLSAIIWTTTPWTMPSNRAIAVNADLEYNLVQLGDERVILAAELVESVAKAVGVEQVKILGSVKGADLELSRFHHPFYDFTVPVILGDHVTTDGGTGLVHTAPDHGLDDFIVGKQYDLPMAGLVSNDGKFISMTEFFAGKGVFEANPLVIEKLQEVGNLLKVEKIKHSYPHCWRHKTPIIFRATPQWFIGMETQGLRQQALGEIKQVRWIPDWGQARIEKMVENRPDWCISRQRTWGVPMTLFVHKETEELHPRTLDLLEEVAKRVERAGIQAWWDLDEKELLGADAETYRKVPDTLDVWFDSGSTYSSVVANRLEFNGQNIDMYLEGSDQHRGWFMSSLMLSTATDSKAPYKQVLTHGFTVDGQGRKMSKSIGNIVTPQEVMDKFGGDILRLWVASTDYTGEMTVSDEILKRAADSYRRIRNTARFLLANLNGFDPKRDLVKPEEMISLDRWAVACALDAQHEIKDAYDNYQFHTVVQRLMRFCSVEMGSFYLDIIKDRQYTTKASSLARRSCQTALWHIAEALVRWMAPILSFTADEIWQHLPQTESARAEFVFTEEFYQGLFGLGENEKLDDAYWQQLIKVRSEVNRVLEISRNNKEIGGGLEAEVTLYANDEYRALLEQLGNELRFVLITSKVDVKSLSEKPADLADSELEGITVSVTRSNAEKCPRCWHYSDKIGVNPEHPMLCPRCVENVVGNGEVRHFA.

A 'HIGH' region motif is present at residues Pro59–His69. Glu562 is an L-isoleucyl-5'-AMP binding site. Positions Lys603–Ser607 match the 'KMSKS' region motif. Lys606 contacts ATP. Zn(2+) is bound by residues Cys904, Cys907, Cys924, and Cys927.

It belongs to the class-I aminoacyl-tRNA synthetase family. IleS type 1 subfamily. In terms of assembly, monomer. Requires Zn(2+) as cofactor.

Its subcellular location is the cytoplasm. The catalysed reaction is tRNA(Ile) + L-isoleucine + ATP = L-isoleucyl-tRNA(Ile) + AMP + diphosphate. Catalyzes the attachment of isoleucine to tRNA(Ile). As IleRS can inadvertently accommodate and process structurally similar amino acids such as valine, to avoid such errors it has two additional distinct tRNA(Ile)-dependent editing activities. One activity is designated as 'pretransfer' editing and involves the hydrolysis of activated Val-AMP. The other activity is designated 'posttransfer' editing and involves deacylation of mischarged Val-tRNA(Ile). In Haemophilus influenzae (strain PittEE), this protein is Isoleucine--tRNA ligase.